The sequence spans 1494 residues: B-cell CLL/lymphoma 9-like protein (1494 aa).

2 disordered regions span residues 1–236 (MRIL…PPSQ) and 269–496 (VPRA…DMGQ). Pro residues predominate over residues 20 to 37 (GSPPLSPRGHCPPAPAKP). Phosphoserine is present on residues Ser-21 and Ser-25. Position 36 is an N6-acetyllysine (Lys-36). Polar residues-rich tracts occupy residues 45-70 (TNHG…TCNL) and 85-96 (NQISPSNSSLKN). Ser-88 is modified (phosphoserine). Residues Lys-108 and Lys-110 each carry the N6-acetyllysine modification. Basic and acidic residues-rich tracts occupy residues 114–126 (ERSV…EQRE) and 134–153 (SEAK…ERKQ). Phosphoserine is present on residues Ser-116 and Ser-118. Lys-137 carries the N6-acetyllysine modification. Residues 193–207 (PGQTAQLPLSESSAP) are compositionally biased toward polar residues. Pro residues-rich tracts occupy residues 279–289 (KVPPTPEPLPL) and 299–322 (SQPP…PPEG). Residues 302–530 (PPLPPPPPAP…QEEYYEEKRR (229 aa)) form a necessary for interaction with CTNNB1 region. Residues 348 to 360 (THPNTPTAATANN) show a composition bias toward low complexity. The segment covering 396–418 (LSKEQLEHRERSLQTLRDIERLL) has biased composition (basic and acidic residues). At Ser-421 the chain carries Phosphoserine. A Phosphothreonine modification is found at Thr-511. Arg-677 is modified (asymmetric dimethylarginine). A phosphoserine mark is found at Ser-747, Ser-810, Ser-912, Ser-923, Ser-935, Ser-939, Ser-944, Ser-972, Ser-984, Ser-988, Ser-994, Ser-1001, Ser-1007, and Ser-1014. Disordered regions lie at residues 905-1082 (RGLG…NPLS) and 1113-1206 (ELLP…PGGP). Polar residues predominate over residues 932–957 (PTLSQVHSPLVTSPSANLKSPQTPSQ). Over residues 974–993 (QVLSSSLGVRSPTGSPSRLK) the composition is skewed to polar residues. Over residues 1016–1035 (GVSQNKQPPLSINSSSTLGN) the composition is skewed to polar residues. Low complexity predominate over residues 1046–1059 (PRNSSSAPPANPSS). Residues 1060–1082 (GLMNPSLPFTSSPDPTPSQNPLS) show a composition bias toward polar residues. Residues 1119–1129 (PLLPPPPPPQG) show a composition bias toward pro residues. Polar residues predominate over residues 1133-1143 (GISNNQPNQMH). Over residues 1165-1176 (HEPPPTMLPSPT) the composition is skewed to pro residues. Lys-1339 is covalently cross-linked (Glycyl lysine isopeptide (Lys-Gly) (interchain with G-Cter in SUMO2)).

This sequence belongs to the BCL9 family. In terms of assembly, found in a complex with CDC73; CTNNB1 and PYGO1. Interacts with CTNNB1. In terms of tissue distribution, expressed in kidney, liver, lung, testis, brain, spleen, heart and skeletal muscle. Highly expressed in numerous colorectal tumors compared to corresponding non-cancerous tissues.

Its subcellular location is the nucleus. In terms of biological role, transcriptional regulator that acts as an activator. Promotes beta-catenin transcriptional activity. Plays a role in tumorigenesis. Enhances the neoplastic transforming activity of CTNNB1. The sequence is that of B-cell CLL/lymphoma 9-like protein (Bcl9l) from Mus musculus (Mouse).